The following is a 178-amino-acid chain: Large ribosomal subunit protein uL6 (178 aa).

This sequence belongs to the universal ribosomal protein uL6 family. In terms of assembly, part of the 50S ribosomal subunit.

Its function is as follows. This protein binds to the 23S rRNA, and is important in its secondary structure. It is located near the subunit interface in the base of the L7/L12 stalk, and near the tRNA binding site of the peptidyltransferase center. The chain is Large ribosomal subunit protein uL6 from Limosilactobacillus reuteri (strain DSM 20016) (Lactobacillus reuteri).